A 320-amino-acid chain; its full sequence is Cytochrome f (320 aa).

The signal sequence occupies residues 1-35 (MQTRNAFSWLKKQITRSISVSLMIYILTRTSISSA). Heme is bound by residues tyrosine 36, cysteine 56, cysteine 59, and histidine 60. The chain crosses the membrane as a helical span at residues 286–305 (VQGLLFFLASVILAQIFLVL).

The protein belongs to the cytochrome f family. In terms of assembly, the 4 large subunits of the cytochrome b6-f complex are cytochrome b6, subunit IV (17 kDa polypeptide, petD), cytochrome f and the Rieske protein, while the 4 small subunits are PetG, PetL, PetM and PetN. The complex functions as a dimer. The cofactor is heme.

Its subcellular location is the plastid. The protein localises to the chloroplast thylakoid membrane. Its function is as follows. Component of the cytochrome b6-f complex, which mediates electron transfer between photosystem II (PSII) and photosystem I (PSI), cyclic electron flow around PSI, and state transitions. In Atropa belladonna (Belladonna), this protein is Cytochrome f.